Consider the following 1177-residue polypeptide: DNA-directed RNA polymerase subunit beta' (1177 aa).

Zn(2+) contacts are provided by C60, C62, C75, and C78. Mg(2+)-binding residues include D450, D452, and D454. Residues C795, C869, C876, and C879 each coordinate Zn(2+).

The protein belongs to the RNA polymerase beta' chain family. In terms of assembly, the RNAP catalytic core consists of 2 alpha, 1 beta, 1 beta' and 1 omega subunit. When a sigma factor is associated with the core the holoenzyme is formed, which can initiate transcription. The cofactor is Mg(2+). Requires Zn(2+) as cofactor.

The catalysed reaction is RNA(n) + a ribonucleoside 5'-triphosphate = RNA(n+1) + diphosphate. DNA-dependent RNA polymerase catalyzes the transcription of DNA into RNA using the four ribonucleoside triphosphates as substrates. The protein is DNA-directed RNA polymerase subunit beta' of Clostridium botulinum (strain Alaska E43 / Type E3).